Consider the following 38-residue polypeptide: Large ribosomal subunit protein bL36 (38 aa).

This sequence belongs to the bacterial ribosomal protein bL36 family.

In Roseiflexus castenholzii (strain DSM 13941 / HLO8), this protein is Large ribosomal subunit protein bL36.